The sequence spans 497 residues: 3-octaprenyl-4-hydroxybenzoate carboxy-lyase (497 aa).

N175 contributes to the Mn(2+) binding site. Residues 178 to 180, 192 to 194, and 197 to 198 each bind prenylated FMN; these read IYR, RWL, and RG. Residue E241 participates in Mn(2+) binding. D290 (proton donor) is an active-site residue.

Belongs to the UbiD family. As to quaternary structure, homohexamer. It depends on prenylated FMN as a cofactor. Mn(2+) is required as a cofactor.

The protein resides in the cell membrane. The enzyme catalyses a 4-hydroxy-3-(all-trans-polyprenyl)benzoate + H(+) = a 2-(all-trans-polyprenyl)phenol + CO2. The protein operates within cofactor biosynthesis; ubiquinone biosynthesis. Catalyzes the decarboxylation of 3-octaprenyl-4-hydroxy benzoate to 2-octaprenylphenol, an intermediate step in ubiquinone biosynthesis. The sequence is that of 3-octaprenyl-4-hydroxybenzoate carboxy-lyase from Shigella dysenteriae serotype 1 (strain Sd197).